A 495-amino-acid polypeptide reads, in one-letter code: UDP-glycosyltransferase 1 (495 aa).

The active-site Proton acceptor is H24. An anthocyanidin is bound at residue H24. Catalysis depends on D129, which acts as the Charge relay. The UDP-alpha-D-glucose site is built by Q358, H373, W376, N377, S378, and E381. Residue G396 participates in an anthocyanidin binding. D397 and Q398 together coordinate UDP-alpha-D-glucose.

This sequence belongs to the UDP-glycosyltransferase family.

It catalyses the reaction oleanolate + UDP-alpha-D-glucose = oleanolate 3-O-beta-D-glucoside + UDP + H(+). Functionally, catalyzes the transfer of a glucose (Glc) moiety from UDP-Glc to the C-3 position of the oleanane sapogenins oleanolate and hederagenin. The monoglucosylated hederagenin 3-O-beta-D-glucoside is a feeding deterrent of the yellow-striped flea beetle (Phyllotreta nemorum). This chain is UDP-glycosyltransferase 1, found in Barbarea vulgaris (Yellow rocket).